A 502-amino-acid chain; its full sequence is ATP synthase subunit alpha (502 aa).

169-176 lines the ATP pocket; the sequence is GDRQTGKT.

Belongs to the ATPase alpha/beta chains family. F-type ATPases have 2 components, CF(1) - the catalytic core - and CF(0) - the membrane proton channel. CF(1) has five subunits: alpha(3), beta(3), gamma(1), delta(1), epsilon(1). CF(0) has three main subunits: a(1), b(2) and c(9-12). The alpha and beta chains form an alternating ring which encloses part of the gamma chain. CF(1) is attached to CF(0) by a central stalk formed by the gamma and epsilon chains, while a peripheral stalk is formed by the delta and b chains. The F(1)F(0) complex interacts with SpoIIIJ and YqjG; YqgA is found in the same complex.

It localises to the cell membrane. The protein localises to the membrane raft. It catalyses the reaction ATP + H2O + 4 H(+)(in) = ADP + phosphate + 5 H(+)(out). Its function is as follows. Produces ATP from ADP in the presence of a proton gradient across the membrane. The alpha chain is a regulatory subunit. This chain is ATP synthase subunit alpha, found in Bacillus subtilis (strain 168).